The following is a 403-amino-acid chain: N-isopropylammelide isopropyl amidohydrolase (403 aa).

3 residues coordinate Zn(2+): His-60, His-62, and His-217. His-249 acts as the Proton donor/acceptor in catalysis. Asp-303 provides a ligand contact to Zn(2+).

Belongs to the metallo-dependent hydrolases superfamily. N-acyl-D-amino-acid deacylase family. As to quaternary structure, homotetramer. Zn(2+) serves as cofactor.

It is found in the cytoplasm. The catalysed reaction is N-isopropylammelide + H2O + H(+) = isopropylamine + cyanurate. It participates in xenobiotic degradation; atrazine degradation; cyanurate from atrazine: step 3/3. With respect to regulation, inhibited by N-ethylammeline, N-hydroxyethylammeline, N-isopropylammeline, ammeline and 2-amino-4hydroxy-1,3,5-s-triazine. Its function is as follows. Transforms N-isopropylammelide to cyanuric acid and isopropylamine. This is N-isopropylammelide isopropyl amidohydrolase (atzC) from Pseudomonas sp. (strain ADP).